Reading from the N-terminus, the 326-residue chain is MILATKVFFTSFVFGFILFPYFIKLLKKISKDGQPIRSCGPESHLITKKNVPPMGGIIILTSSLLPILLWVQLTPEILLLILITLFFALLGFIDDYLKLKTNHYRGLSAKTKILIQFIVALVGVFILKLYSAECFTKTSLFKGVIIDFGYLYVPFAAFVIVGSSNAVNLTDGLDGLAATQVITSFAFLGLIAYITQADMNITLFCIAFIGAILSFLWFNTHPAKIFMGDVGSLSVGAALGLTSVLIKREMLFAVIGIIFVIETLSVIIQISYFKYTKFKYGEGKRVFLMAPMHHHFEKKGWSENVIVMKFWIISIICSVFTITFLL.

10 helical membrane-spanning segments follow: residues 2-22 (ILAT…FPYF), 51-71 (VPPM…LLWV), 73-93 (LTPE…LGFI), 113-133 (ILIQ…YSAE), 143-163 (GVII…IVGS), 175-195 (GLAA…AYIT), 199-219 (MNIT…LWFN), 225-245 (IFMG…TSVL), 250-270 (MLFA…IIQI), and 305-325 (VIVM…ITFL).

It belongs to the glycosyltransferase 4 family. MraY subfamily. Requires Mg(2+) as cofactor.

The protein localises to the cell membrane. It carries out the reaction UDP-N-acetyl-alpha-D-muramoyl-L-alanyl-gamma-D-glutamyl-meso-2,6-diaminopimeloyl-D-alanyl-D-alanine + di-trans,octa-cis-undecaprenyl phosphate = di-trans,octa-cis-undecaprenyl diphospho-N-acetyl-alpha-D-muramoyl-L-alanyl-D-glutamyl-meso-2,6-diaminopimeloyl-D-alanyl-D-alanine + UMP. It participates in cell wall biogenesis; peptidoglycan biosynthesis. In terms of biological role, catalyzes the initial step of the lipid cycle reactions in the biosynthesis of the cell wall peptidoglycan: transfers peptidoglycan precursor phospho-MurNAc-pentapeptide from UDP-MurNAc-pentapeptide onto the lipid carrier undecaprenyl phosphate, yielding undecaprenyl-pyrophosphoryl-MurNAc-pentapeptide, known as lipid I. This is Phospho-N-acetylmuramoyl-pentapeptide-transferase from Wolbachia sp. subsp. Drosophila simulans (strain wRi).